Reading from the N-terminus, the 280-residue chain is MSINLQNVSYTYQVGTPFEGRALFNINLDILDGSYTAFIGHTGSGKSTIMQLLNGLHVPTTGIVSVDKQDITNHSKNKEIKSIRKHVGLVFQFPESQLFEETVLKDVAFGPQNFGISPEEAEALAREKLALVGISENLFEKNPFELSGGQMRRVAIAGILAMQPKVLVLDEPTAGLDPKGRKELMTIFKKLHQSGMTIVLVTHLMDDVANYADFVYVLDKGKIILSGKPKTIFQQVSLLEKKQLGVPKVTKLAQRLVDRGIPISSLPITLEELREVLKHG.

The ABC transporter domain occupies 3–245 (INLQNVSYTY…VSLLEKKQLG (243 aa)). Position 40-47 (40-47 (GHTGSGKS)) interacts with ATP.

It belongs to the ABC transporter superfamily. Energy-coupling factor EcfA family. In terms of assembly, forms a stable energy-coupling factor (ECF) transporter complex composed of 2 membrane-embedded substrate-binding proteins (S component), 2 ATP-binding proteins (A component) and 2 transmembrane proteins (T component).

It localises to the cell membrane. ATP-binding (A) component of a common energy-coupling factor (ECF) ABC-transporter complex. Unlike classic ABC transporters this ECF transporter provides the energy necessary to transport a number of different substrates. This Streptococcus pyogenes serotype M3 (strain ATCC BAA-595 / MGAS315) protein is Energy-coupling factor transporter ATP-binding protein EcfA2.